The sequence spans 72 residues: UPF0346 protein GK1571 (72 aa).

Belongs to the UPF0346 family.

This chain is UPF0346 protein GK1571, found in Geobacillus kaustophilus (strain HTA426).